The primary structure comprises 183 residues: NADH-quinone oxidoreductase subunit B (183 aa).

[4Fe-4S] cluster is bound by residues cysteine 60, cysteine 61, cysteine 125, and cysteine 154.

It belongs to the complex I 20 kDa subunit family. In terms of assembly, NDH-1 is composed of 14 different subunits. Subunits NuoB, C, D, E, F, and G constitute the peripheral sector of the complex. [4Fe-4S] cluster is required as a cofactor.

The protein localises to the cell inner membrane. The catalysed reaction is a quinone + NADH + 5 H(+)(in) = a quinol + NAD(+) + 4 H(+)(out). NDH-1 shuttles electrons from NADH, via FMN and iron-sulfur (Fe-S) centers, to quinones in the respiratory chain. The immediate electron acceptor for the enzyme in this species is believed to be ubiquinone. Couples the redox reaction to proton translocation (for every two electrons transferred, four hydrogen ions are translocated across the cytoplasmic membrane), and thus conserves the redox energy in a proton gradient. The polypeptide is NADH-quinone oxidoreductase subunit B (Desulfovibrio desulfuricans (strain ATCC 27774 / DSM 6949 / MB)).